The chain runs to 486 residues: UDP-N-acetylmuramate--L-alanine ligase (486 aa).

129-135 (GTHGKTT) serves as a coordination point for ATP.

The protein belongs to the MurCDEF family.

It localises to the cytoplasm. It carries out the reaction UDP-N-acetyl-alpha-D-muramate + L-alanine + ATP = UDP-N-acetyl-alpha-D-muramoyl-L-alanine + ADP + phosphate + H(+). Its pathway is cell wall biogenesis; peptidoglycan biosynthesis. In terms of biological role, cell wall formation. The chain is UDP-N-acetylmuramate--L-alanine ligase from Vibrio atlanticus (strain LGP32) (Vibrio splendidus (strain Mel32)).